Here is a 219-residue protein sequence, read N- to C-terminus: C-8 sterol isomerase erg2 (219 aa).

The helical transmembrane segment at 1–21 (MKLTKFLTVFIPFIAGLIYYI) threads the bilayer.

Belongs to the ERG2 family.

It is found in the endoplasmic reticulum membrane. The catalysed reaction is fecosterol = episterol. It functions in the pathway steroid metabolism; ergosterol biosynthesis. Its function is as follows. C-8 sterol isomerase; part of the third module of ergosterol biosynthesis pathway that includes by the late steps of the pathway. Erg2 catalyzes the reaction which results in unsaturation at C-7 in the B ring of sterols and thus converts fecosterol to episterol. The third module or late pathway involves the ergosterol synthesis itself through consecutive reactions that mainly occur in the endoplasmic reticulum (ER) membrane. Firstly, the squalene synthase erg9 catalyzes the condensation of 2 farnesyl pyrophosphate moieties to form squalene, which is the precursor of all steroids. Secondly, squalene is converted into lanosterol by the consecutive action of the squalene epoxidase erg1 and the lanosterol synthase erg7. The lanosterol 14-alpha-demethylase erg11/cyp1 catalyzes C14-demethylation of lanosterol to produce 4,4'-dimethyl cholesta-8,14,24-triene-3-beta-ol. In the next steps, a complex process involving various demethylation, reduction and desaturation reactions catalyzed by the C-14 reductase erg24 and the C-4 demethylation complex erg25-erg26-erg27 leads to the production of zymosterol. Erg28 likely functions in the C-4 demethylation complex reaction by tethering erg26 and Erg27 to the endoplasmic reticulum or to facilitate interaction between these proteins. Then, the sterol 24-C-methyltransferase erg6 catalyzes the methyl transfer from S-adenosyl-methionine to the C-24 of zymosterol to form fecosterol. The C-8 sterol isomerase erg2 catalyzes the reaction which results in unsaturation at C-7 in the B ring of sterols and thus converts fecosterol to episterol. The sterol-C5-desaturases erg31 and erg32 then catalyze the introduction of a C-5 double bond in the B ring to produce 5-dehydroepisterol. The C-22 sterol desaturase erg5 further converts 5-dehydroepisterol into ergosta-5,7,22,24(28)-tetraen-3beta-ol by forming the C-22(23) double bond in the sterol side chain. Finally, ergosta-5,7,22,24(28)-tetraen-3beta-ol is substrate of the C-24(28) sterol reductase erg4 to produce ergosterol. In the genus Schizosaccharomyces, a second route exists between lanosterol and fecosterol, via the methylation of lanosterol to eburicol by erg6, followed by C14-demethylation by erg11/cyp1 and C4-demethylation by the demethylation complex erg25-erg26-erg27. The polypeptide is C-8 sterol isomerase erg2 (Schizosaccharomyces pombe (strain 972 / ATCC 24843) (Fission yeast)).